Reading from the N-terminus, the 206-residue chain is Imidazoleglycerol-phosphate dehydratase (206 aa).

Belongs to the imidazoleglycerol-phosphate dehydratase family.

The protein resides in the cytoplasm. The enzyme catalyses D-erythro-1-(imidazol-4-yl)glycerol 3-phosphate = 3-(imidazol-4-yl)-2-oxopropyl phosphate + H2O. The protein operates within amino-acid biosynthesis; L-histidine biosynthesis; L-histidine from 5-phospho-alpha-D-ribose 1-diphosphate: step 6/9. The sequence is that of Imidazoleglycerol-phosphate dehydratase from Cutibacterium acnes (strain DSM 16379 / KPA171202) (Propionibacterium acnes).